A 79-amino-acid polypeptide reads, in one-letter code: Small ribosomal subunit protein uS17 (79 aa).

Belongs to the universal ribosomal protein uS17 family. In terms of assembly, part of the 30S ribosomal subunit.

In terms of biological role, one of the primary rRNA binding proteins, it binds specifically to the 5'-end of 16S ribosomal RNA. The polypeptide is Small ribosomal subunit protein uS17 (Caulobacter vibrioides (strain NA1000 / CB15N) (Caulobacter crescentus)).